A 460-amino-acid chain; its full sequence is DNA repair protein RAD57 (460 aa).

Position 125-132 (125-132 (GESSTGKS)) interacts with ATP.

Belongs to the RecA family.

It localises to the nucleus. Functionally, participates in the repair of X-ray-induced damage to DNA and in meiosis. It may act in part by stabilizing a repair complex of other RAD genes. This is DNA repair protein RAD57 (RAD57) from Saccharomyces cerevisiae (strain ATCC 204508 / S288c) (Baker's yeast).